Consider the following 486-residue polypeptide: Corytuberine synthase (486 aa).

Residues 6–21 (ALFSLIPVILVFILLL) form a helical membrane-spanning segment. Residue Cys428 coordinates heme.

It belongs to the cytochrome P450 family. Requires heme as cofactor.

Its subcellular location is the endoplasmic reticulum membrane. It carries out the reaction (S)-reticuline + reduced [NADPH--hemoprotein reductase] + O2 = (S)-corytuberine + oxidized [NADPH--hemoprotein reductase] + 2 H2O + 2 H(+). With respect to regulation, inhibited by ketoconazole. Its function is as follows. Cytochrome P450 that catalyzes an intramolecular C-C phenol coupling of (S)-reticuline in magnoflorine biosynthesis. Catalyzes the formation of (S)-corytuberine from (S)-reticuline, and also, with a lover efficiency, the 4'-O-demethylation of codamine to produce orientaline, and subsequent C-C-phenol coupling of orientaline. Can also use (R,S)-norreticuline, (R,S)-orientaline, (S)-N-methylcoclaurine and (S)-coclaurine as substrates, but not (R,S)-6-O-methyllaudanosoline, (R,S)-6-O-methylnorlaudanosoline, (R,S)-laudanine, (R,S)-norlaudanine, (R,S)-4'-O-methyllaudanosoline, (R,S)-pseudocodamine, (R,S)-norpseudocodamine, (R,S)-laudanosine, (R,S)-norlaudanosine, (R,S)-laudanosoline or (R,S)-norlaudanosoline. The chain is Corytuberine synthase from Coptis japonica (Japanese goldthread).